The chain runs to 258 residues: MSLKDSAKIALSLMDLTTLNDNDTDEKVIALCQQGKTEFGTPAAVCVYPRFVPIARKALKAQGTEQVKIATVTNFPHGNDDIDIAVAETKAAVAYGADEVDVVFPYKALMAGNEQIGFELVQQCKAVCQASNVLLKVIIETGELKTAELIRKASEISIKAGADFIKTSTGKVPVNATLESARIMLETIRDLKVADRVGFKAAGGVKTAEEAAQYLALAQEILGHDWVNSDHFRFGASSLLTNLLAALNGQANQKVSGY.

Asp101 functions as the Proton donor/acceptor in the catalytic mechanism. Residue Lys166 is the Schiff-base intermediate with acetaldehyde of the active site. Lys200 (proton donor/acceptor) is an active-site residue.

It belongs to the DeoC/FbaB aldolase family. DeoC type 2 subfamily.

It localises to the cytoplasm. The catalysed reaction is 2-deoxy-D-ribose 5-phosphate = D-glyceraldehyde 3-phosphate + acetaldehyde. Its pathway is carbohydrate degradation; 2-deoxy-D-ribose 1-phosphate degradation; D-glyceraldehyde 3-phosphate and acetaldehyde from 2-deoxy-alpha-D-ribose 1-phosphate: step 2/2. Functionally, catalyzes a reversible aldol reaction between acetaldehyde and D-glyceraldehyde 3-phosphate to generate 2-deoxy-D-ribose 5-phosphate. The protein is Deoxyribose-phosphate aldolase of Actinobacillus pleuropneumoniae serotype 3 (strain JL03).